The primary structure comprises 1230 residues: Soluble starch synthase 3, chloroplastic/amyloplastic (1230 aa).

The transit peptide at 1 to 60 (MDVPFPLHRSLSCTSVSNAITHLKIKPILGFVSHGTTSLSVQSSSWRKDGMVTGVSFSIC) directs the protein to the chloroplast. Residues 66-189 (RRRRKVSTPR…KDAVKLNKSK (124 aa)) are disordered. The span at 124 to 145 (VEARVETSDDDTKGVVRDHKFL) shows a compositional bias: basic and acidic residues. Polar residues predominate over residues 152–170 (NGSTKSISMSPVRVSSQFV). Residues 177 to 189 (GDDKDAVKLNKSK) are compositionally biased toward basic and acidic residues. Lysine 794 contacts ADP-alpha-D-glucose.

This sequence belongs to the glycosyltransferase 1 family. Bacterial/plant glycogen synthase subfamily. As to expression, tuber, sink and source leaves.

The protein localises to the plastid. It localises to the chloroplast. Its subcellular location is the amyloplast. The enzyme catalyses [(1-&gt;4)-alpha-D-glucosyl](n) + ADP-alpha-D-glucose = [(1-&gt;4)-alpha-D-glucosyl](n+1) + ADP + H(+). It functions in the pathway glycan biosynthesis; starch biosynthesis. In terms of biological role, may account for most of the soluble starch synthase activity in the tubers. Contributes only a tiny percentage of the granule-bound activity, but may also contribute to the deposition of transient starch in chloroplasts of leaves. This chain is Soluble starch synthase 3, chloroplastic/amyloplastic (SS3), found in Solanum tuberosum (Potato).